A 792-amino-acid chain; its full sequence is DNA ligase (792 aa).

NAD(+) contacts are provided by residues 42–46 (DAEYD), 91–92 (SL), and glutamate 124. The N6-AMP-lysine intermediate role is filled by lysine 126. Positions 147, 189, 306, and 330 each coordinate NAD(+). Residues cysteine 424, cysteine 426, cysteine 448, and cysteine 454 each coordinate Zn(2+). In terms of domain architecture, BRCT spans 714–792 (KTDTAVAGKT…EDEWLAMVGG (79 aa)).

This sequence belongs to the NAD-dependent DNA ligase family. LigA subfamily. It depends on Mg(2+) as a cofactor. Mn(2+) is required as a cofactor.

The catalysed reaction is NAD(+) + (deoxyribonucleotide)n-3'-hydroxyl + 5'-phospho-(deoxyribonucleotide)m = (deoxyribonucleotide)n+m + AMP + beta-nicotinamide D-nucleotide.. Functionally, DNA ligase that catalyzes the formation of phosphodiester linkages between 5'-phosphoryl and 3'-hydroxyl groups in double-stranded DNA using NAD as a coenzyme and as the energy source for the reaction. It is essential for DNA replication and repair of damaged DNA. The sequence is that of DNA ligase from Caulobacter sp. (strain K31).